Here is a 431-residue protein sequence, read N- to C-terminus: Pheromone alpha factor receptor (431 aa).

The Extracellular portion of the chain corresponds to 1–49 (MSDAAPSLSNLFYDPTYNPGQSTINYTSIYGNGSTITFDELQGLVNSTV). 2 N-linked (GlcNAc...) asparagine glycosylation sites follow: asparagine 25 and asparagine 32. Residues 50 to 72 (TQAIMFGVRCGAAALTLIVMWMT) form a helical membrane-spanning segment. Positions 53–61 (IMFGVRCGA) match the Glycine zipper motif motif. Residues 73 to 78 (SRSRKT) lie on the Cytoplasmic side of the membrane. Residues 79 to 102 (PIFIINQVSLFLIILHSALYFKYL) traverse the membrane as a helical segment. Over 103–132 (LSNYSSVTYALTGFPQFISRGDVHVYGATN) the chain is Extracellular. The helical transmembrane segment at 133–156 (IIQVLLVASIETSLVFQIKVIFTG) threads the bilayer. Residues 157–163 (DNFKRIG) lie on the Cytoplasmic side of the membrane. A helical membrane pass occupies residues 164–188 (LMLTSISFTLGIATVTMYFVSAVKG). The Extracellular portion of the chain corresponds to 189 to 205 (MIVTYNDVSATQDKYFN). Residues 206–230 (ASTILLASSINFMSFVLVVKLILAI) form a helical membrane-spanning segment. Residues 231 to 241 (RSRRFLGLKQF) lie on the Cytoplasmic side of the membrane. Residues 242-266 (DSFHILLIMSCQSLLVPSIIFILAY) form a helical membrane-spanning segment. Topologically, residues 267-275 (SLKPNQGTD) are extracellular. A helical membrane pass occupies residues 276 to 299 (VLTTVATLLAVLSLPLSSMWATAA). Residues 300-431 (NNASKTNTIT…KFWTEDNNNL (132 aa)) lie on the Cytoplasmic side of the membrane. A phosphoserine mark is found at serine 310 and serine 315. Residue threonine 329 is modified to Phosphothreonine. A Phosphoserine modification is found at serine 331. Lysine 337 participates in a covalent cross-link: Glycyl lysine isopeptide (Lys-Gly) (interchain with G-Cter in ubiquitin). A Phosphoserine modification is found at serine 360. Phosphothreonine is present on threonine 363. Serine 366 carries the phosphoserine modification. Lysine 374 is covalently cross-linked (Glycyl lysine isopeptide (Lys-Gly) (interchain with G-Cter in ubiquitin)). Residues 379-389 (QLPTPTSSKNT) are compositionally biased toward polar residues. The interval 379–406 (QLPTPTSSKNTRIGPFADASYKEGEVEP) is disordered. A Phosphothreonine modification is found at threonine 382. Residues serine 385 and serine 386 each carry the phosphoserine modification. A Glycyl lysine isopeptide (Lys-Gly) (interchain with G-Cter in ubiquitin) cross-link involves residue lysine 400. 2 positions are modified to phosphothreonine: threonine 411 and threonine 414. Residue lysine 422 forms a Glycyl lysine isopeptide (Lys-Gly) (interchain with G-Cter in ubiquitin) linkage.

It belongs to the G-protein coupled receptor 4 family. As to quaternary structure, homodimer. Might also for higher order homooligomers such as homotetramers. Oligomerization is mediated significantly by transmembrane domain 1 (TMD1), possibly in concert with the N-terminal extracellular domain and TMD2. Interaction with GPA1, its dedicated G-alpha protein. Undergoes hyperphosphorylation of the C-terminal cytoplasmic domain after binding of the alpha-factor, which leads to internalization by endocytosis. Post-translationally, monoubiquitination at Lys-337 triggers internalization of STE2. In terms of processing, N-glycosylated. N-glycosylation may be involved in the sorting process for misfolded STE2 protein. As to expression, expressed in MATa strains but not in MATalpha strains.

It localises to the cell membrane. Fungal class D1 G-protein-coupled receptor that acts as an alpha-factor pheromone receptor performing pheromone-dependent signal transduction involved in cellular conjugation, mating projection assembly, and in cell fusion. Following alpha-factor-binding, the signal is transmitted via a tripartite G protein consisting of alpha-, beta- and gamma-subunits (GAP1, STE4 and STE8 respectively) that prepares the cell for conjugation. In the inactive state, the cytoplasmic end of transmembrane domain 7 (TMD7) is unstructured and packs between TMD1-6, blocking the G protein coupling site. Agonist binding results in the outward movement of the extracellular ends of TMD6 and TMD7 by 6 Angstroms. On the intracellular surface, the G protein coupling site is formed by a 20 Angstroms outward movement of the unstructured region in TMD7 that unblocks the site, and a 12 Angstroms inward movement of TMD6. This Saccharomyces cerevisiae (strain ATCC 204508 / S288c) (Baker's yeast) protein is Pheromone alpha factor receptor (STE2).